The following is a 201-amino-acid chain: Cysteine dioxygenase type 1 (201 aa).

3 residues coordinate Fe cation: His-86, His-88, and His-141. The segment at residues 93–158 (CFLKLLQGQL…TEPAVSLHLY (66 aa)) is a cross-link (3'-(S-cysteinyl)-tyrosine (Cys-Tyr)).

Belongs to the cysteine dioxygenase family. In terms of assembly, monomer. Requires Fe cation as cofactor. It depends on Ni(2+) as a cofactor. The cofactor is Zn(2+). Post-translationally, the thioether cross-link between Cys-93 and Tyr-158 plays a structural role through stabilizing the Fe(2+) ion, and prevents the production of highly damaging free hydroxyl radicals by holding the oxygen radical via hydroxyl hydrogen.

The enzyme catalyses L-cysteine + O2 = 3-sulfino-L-alanine + H(+). The protein operates within organosulfur biosynthesis; taurine biosynthesis; hypotaurine from L-cysteine: step 1/2. Functionally, catalyzes the oxidation of cysteine to cysteine sulfinic acid with addition of molecular dioxygen. The sequence is that of Cysteine dioxygenase type 1 (cdo1) from Danio rerio (Zebrafish).